Here is a 92-residue protein sequence, read N- to C-terminus: Probable Fe(2+)-trafficking protein (92 aa).

It belongs to the Fe(2+)-trafficking protein family.

Could be a mediator in iron transactions between iron acquisition and iron-requiring processes, such as synthesis and/or repair of Fe-S clusters in biosynthetic enzymes. The sequence is that of Probable Fe(2+)-trafficking protein from Shewanella pealeana (strain ATCC 700345 / ANG-SQ1).